Reading from the N-terminus, the 159-residue chain is Insertion element IS136 uncharacterized 16.9 kDa protein (159 aa).

The segment covering Arg-126–Ser-142 has biased composition (low complexity). Residues Arg-126–Thr-159 form a disordered region.

The sequence is that of Insertion element IS136 uncharacterized 16.9 kDa protein from Agrobacterium tumefaciens (strain T37).